The primary structure comprises 727 residues: Anaphase-promoting complex subunit 5 (727 aa).

Position 180 is a phosphoserine (Ser-180). TPR repeat units lie at residues 194–234 (QKQA…FNPD), 235–285 (FAEA…GRSL), 286–322 (RYAA…SNDH), 323–359 (VCLQ…FGLP), 360–390 (RAFA…SELI), 391–438 (DISI…TESF), 439–472 (AVAL…FPPN), 473–512 (SQHA…ALNG), 513–552 (IEGV…TEMV), 553–592 (ISVL…QYLA), 593–632 (SETV…ILDK), 633–668 (GRAM…NLTE), and 669–708 (AKNY…CAMV). Thr-217 is subject to Phosphothreonine.

It belongs to the APC5 family. As to quaternary structure, the mammalian APC/C is composed at least of 14 distinct subunits ANAPC1, ANAPC2, CDC27/APC3, ANAPC4, ANAPC5, CDC16/APC6, ANAPC7, CDC23/APC8, ANAPC10, ANAPC11, CDC26/APC12, ANAPC13, ANAPC15 and ANAPC16 that assemble into a complex of at least 19 chains with a combined molecular mass of around 1.2 MDa; APC/C interacts with FZR1 and FBXO5.

The protein localises to the nucleus. It localises to the cytoplasm. Its subcellular location is the cytoskeleton. The protein resides in the spindle. It functions in the pathway protein modification; protein ubiquitination. In terms of biological role, component of the anaphase promoting complex/cyclosome (APC/C), a cell cycle-regulated E3 ubiquitin ligase that controls progression through mitosis and the G1 phase of the cell cycle. The APC/C complex acts by mediating ubiquitination and subsequent degradation of target proteins: it mainly mediates the formation of 'Lys-11'-linked polyubiquitin chains and, to a lower extent, the formation of 'Lys-48'- and 'Lys-63'-linked polyubiquitin chains. The APC/C complex catalyzes assembly of branched 'Lys-11'-/'Lys-48'-linked branched ubiquitin chains on target proteins. This chain is Anaphase-promoting complex subunit 5 (Anapc5), found in Rattus norvegicus (Rat).